We begin with the raw amino-acid sequence, 591 residues long: MKRTNYAGLIDETYLNQTVTLTGWVQKRRDFGDLIFVDLRDREGIVQLTFNATNADALAVAEKVRSEYVLKITGHVIERAENQINTKIKSGTIEVDVTEAEILSTSKTPPFYIEDDVNANEELKLQYRYLDLRRPEMQKNLRIRSKIMSSAMHFMDTHDFINIETPVLAKSTPEGARDYLVPSRVFPGSFYALPQSPQLFKQLLMGAGFDRYFQIARAFRDEDLRGDRQPEFTQMDVETSFMTADEIRELVNAWVKAMMHDVVDFDLDTAEIPTLTWQESMDRFGTDKPDLRIAYEIKDLSETVKNSEFGVFANAIKGGGVVKALAVPGGADHYSRKDIDKLTKYIERFGAKGLAWMKVAPEGLTGPIAKFFDDEAQAALIASADAQVGDLLLFGAGRADVVSATLDYLRRETAKALDLIDQTNPWAFAWIVDWPLFEYSEDFDRWIAAHHPFTMPNEEDLHYLNDGEDPHKAHAQSYDLVLNGYELGSGSIRIHRMDIQEKMLKALGFTPEKAHEAFGFLLEGMEYGFPPMGGIALGLDRLAMLLAGQENIREVIAFPKNSRATEPMTEAPTRVEGKQLNELGLFVPEAE.

Glutamate 174 contributes to the L-aspartate binding site. The segment at 198 to 201 (QLFK) is aspartate. An L-aspartate-binding site is contributed by arginine 220. ATP contacts are provided by residues 220-222 (RDE) and glutamine 229. Histidine 450 contributes to the L-aspartate binding site. Glutamate 486 is an ATP binding site. Arginine 493 contributes to the L-aspartate binding site. 538–541 (GLDR) provides a ligand contact to ATP.

It belongs to the class-II aminoacyl-tRNA synthetase family. Type 1 subfamily. Homodimer.

Its subcellular location is the cytoplasm. It carries out the reaction tRNA(Asp) + L-aspartate + ATP = L-aspartyl-tRNA(Asp) + AMP + diphosphate. In terms of biological role, catalyzes the attachment of L-aspartate to tRNA(Asp) in a two-step reaction: L-aspartate is first activated by ATP to form Asp-AMP and then transferred to the acceptor end of tRNA(Asp). The protein is Aspartate--tRNA ligase of Leuconostoc mesenteroides subsp. mesenteroides (strain ATCC 8293 / DSM 20343 / BCRC 11652 / CCM 1803 / JCM 6124 / NCDO 523 / NBRC 100496 / NCIMB 8023 / NCTC 12954 / NRRL B-1118 / 37Y).